Here is a 133-residue protein sequence, read N- to C-terminus: ATP synthase epsilon chain, chloroplastic (133 aa).

Belongs to the ATPase epsilon chain family. F-type ATPases have 2 components, CF(1) - the catalytic core - and CF(0) - the membrane proton channel. CF(1) has five subunits: alpha(3), beta(3), gamma(1), delta(1), epsilon(1). CF(0) has three main subunits: a, b and c.

It is found in the plastid. The protein resides in the chloroplast thylakoid membrane. In terms of biological role, produces ATP from ADP in the presence of a proton gradient across the membrane. This is ATP synthase epsilon chain, chloroplastic from Eucalyptus globulus subsp. globulus (Tasmanian blue gum).